Here is a 124-residue protein sequence, read N- to C-terminus: Small ribosomal subunit protein uS12 (124 aa).

Aspartate 89 carries the post-translational modification 3-methylthioaspartic acid.

Belongs to the universal ribosomal protein uS12 family. Part of the 30S ribosomal subunit. Contacts proteins S8 and S17. May interact with IF1 in the 30S initiation complex.

With S4 and S5 plays an important role in translational accuracy. In terms of biological role, interacts with and stabilizes bases of the 16S rRNA that are involved in tRNA selection in the A site and with the mRNA backbone. Located at the interface of the 30S and 50S subunits, it traverses the body of the 30S subunit contacting proteins on the other side and probably holding the rRNA structure together. The combined cluster of proteins S8, S12 and S17 appears to hold together the shoulder and platform of the 30S subunit. The polypeptide is Small ribosomal subunit protein uS12 (Shewanella sediminis (strain HAW-EB3)).